The chain runs to 446 residues: Chromosomal replication initiator protein DnaA (446 aa).

The segment at 1-72 (MENILDLWNK…ADTIYELTGE (72 aa)) is domain I, interacts with DnaA modulators. The interval 72-109 (EELSIKFIIPQNQDEVEAMPKSPIKKMSKEDPVDIPQN) is domain II. The segment at 110–326 (MLNPKYTFDT…GALIRVVAYS (217 aa)) is domain III, AAA+ region. ATP-binding residues include glycine 154, glycine 156, lysine 157, and threonine 158. The domain IV, binds dsDNA stretch occupies residues 327-446 (SLINKDINAD…HVKEIKEQLK (120 aa)).

This sequence belongs to the DnaA family. In terms of assembly, oligomerizes as a right-handed, spiral filament on DNA at oriC.

Its subcellular location is the cytoplasm. In terms of biological role, plays an essential role in the initiation and regulation of chromosomal replication. ATP-DnaA binds to the origin of replication (oriC) to initiate formation of the DNA replication initiation complex once per cell cycle. Binds the DnaA box (a 9 base pair repeat at the origin) and separates the double-stranded (ds)DNA. Forms a right-handed helical filament on oriC DNA; dsDNA binds to the exterior of the filament while single-stranded (ss)DNA is stabiized in the filament's interior. The ATP-DnaA-oriC complex binds and stabilizes one strand of the AT-rich DNA unwinding element (DUE), permitting loading of DNA polymerase. After initiation quickly degrades to an ADP-DnaA complex that is not apt for DNA replication. Binds acidic phospholipids. In Bacillus pumilus (strain SAFR-032), this protein is Chromosomal replication initiator protein DnaA.